We begin with the raw amino-acid sequence, 547 residues long: Transmembrane protein 145 (547 aa).

The helical transmembrane segment at 2–22 (GPHAGPGMLLLLLGFLRISAA) threads the bilayer. 2 N-linked (GlcNAc...) asparagine glycosylation sites follow: N28 and N102. Helical transmembrane passes span 182 to 202 (ITFL…GYIL) and 214 to 234 (MFMA…VYWG). A glycan (N-linked (GlcNAc...) asparagine) is linked at N243. Transmembrane regions (helical) follow at residues 248 to 268 (VLAK…LILL), 283 to 303 (GSIK…VLFI), 325 to 345 (GNIA…LVTL), 356 to 376 (VPFF…ALIA), and 388 to 408 (IVNG…LIIT). Residues N443, N453, and N464 are each glycosylated (N-linked (GlcNAc...) asparagine).

The protein localises to the membrane. This Xenopus laevis (African clawed frog) protein is Transmembrane protein 145 (tmem145).